A 904-amino-acid chain; its full sequence is MSQQTTIRKLAELVNTPVDKLLVQLAEAGMKFSGPDQVVTSTEKMKLLGFLRRTHGKAETPAEAASEAAKKITLNRRKLQEVTVSAGRTKTTVNVEVRQKRTYVKSENEGSGRATPMTPDEERADILAKLAASRQRNLDEQQRLAESDRVRDEEIQRKRDEEQAAKDRAEAERKAAEEAAAAASAPAPVAAAPTPSAAAPAARAPSSPSSAPRPSRPGGASPASRPSTPARPDDRNNAAKHKTRGSHVMVAGVEDDDATKRFAGQLHLSAADRARRSNVRGKPTGRPGSSSSRRGNDNGRGSNQANSGPHGFERPTAPVVREVAIGETITVADLAQKLALKGGDVVKALFKMGVMATITQSIDHDTAALVTEELGHKAVRADNADFEDALLAHAEDAQGDTTTRPPVVTIMGHVDHGKTSLLDYIRRTKIASGEAGGITQHIGAYHVETDRGVISFLDTPGHAAFTSMRARGAKITDIVVLVVAADDGVMPQTKEAVAHAKAAGVPLIVAVNKIDKAGADPLRVKNELLAENVVAEDFGGDTQFIEVSAKVGTGVDTLLDAISLQAEVLELKAVAEGRASGTVIESSLDKGRGPVATVLVQQGALKRGDYLVCGIQYGRVRALFDETGHQPGSAGPSIPVQVLGLSGVPEAGDDFVVVDDERLAKDVAQQRETKRRESRLVASATNRMEDILAQMGKGEGQQVLNLVIKADVQGSVEALKQSLVALSNEDIRINVIHSGVGGITESDANSAAASKATIIGFNVRADASARKIVESNGVDLRYFSIIYDVIDQVKQVASGLLGVEIREEIMGIAQVRDVFRSSKFGAVAGCMIIEGVVKRSKPIRVLRDSVVVFEGELESLRRFKENVDEVRNGNECGIGVKAYNDVKAGDQIECFERIEVARTL.

Disordered stretches follow at residues 134-248 and 267-315; these read RQRN…GSHV and HLSA…FERP. The span at 136-177 shows a compositional bias: basic and acidic residues; the sequence is RNLDEQQRLAESDRVRDEEIQRKRDEEQAAKDRAEAERKAAE. 2 stretches are compositionally biased toward low complexity: residues 178-230 and 285-303; these read EAAA…STPA and GRPGSSSSRRGNDNGRGSN. One can recognise a tr-type G domain in the interval 403–572; the sequence is TRPPVVTIMG…SLQAEVLELK (170 aa). The tract at residues 412–419 is G1; it reads GHVDHGKT. Residue 412–419 participates in GTP binding; sequence GHVDHGKT. A G2 region spans residues 437–441; that stretch reads GITQH. The G3 stretch occupies residues 458 to 461; it reads DTPG. GTP contacts are provided by residues 458–462 and 512–515; these read DTPGH and NKID. Residues 512 to 515 form a G4 region; that stretch reads NKID. The G5 stretch occupies residues 548–550; that stretch reads SAK.

This sequence belongs to the TRAFAC class translation factor GTPase superfamily. Classic translation factor GTPase family. IF-2 subfamily.

The protein resides in the cytoplasm. Its function is as follows. One of the essential components for the initiation of protein synthesis. Protects formylmethionyl-tRNA from spontaneous hydrolysis and promotes its binding to the 30S ribosomal subunits. Also involved in the hydrolysis of GTP during the formation of the 70S ribosomal complex. The protein is Translation initiation factor IF-2 of Xanthomonas oryzae pv. oryzae (strain PXO99A).